The following is a 419-amino-acid chain: UDP-N-acetylglucosamine 1-carboxyvinyltransferase (419 aa).

Phosphoenolpyruvate is bound at residue 22–23; sequence KN. Residue R92 participates in UDP-N-acetyl-alpha-D-glucosamine binding. C116 acts as the Proton donor in catalysis. C116 carries the post-translational modification 2-(S-cysteinyl)pyruvic acid O-phosphothioketal. UDP-N-acetyl-alpha-D-glucosamine is bound by residues D306 and I328.

It belongs to the EPSP synthase family. MurA subfamily.

It is found in the cytoplasm. The catalysed reaction is phosphoenolpyruvate + UDP-N-acetyl-alpha-D-glucosamine = UDP-N-acetyl-3-O-(1-carboxyvinyl)-alpha-D-glucosamine + phosphate. It functions in the pathway cell wall biogenesis; peptidoglycan biosynthesis. Cell wall formation. Adds enolpyruvyl to UDP-N-acetylglucosamine. The chain is UDP-N-acetylglucosamine 1-carboxyvinyltransferase from Psychromonas ingrahamii (strain DSM 17664 / CCUG 51855 / 37).